A 557-amino-acid chain; its full sequence is Potassium-transporting ATPase potassium-binding subunit (557 aa).

Transmembrane regions (helical) follow at residues 5–25 (GFLLIVTFLLVLMVLARPLGS), 63–83 (LSAILGLNMLGLAVLFFMLLG), 132–152 (GLTVQNFLSAASGIAVIFALI), 170–190 (LLRITLWVLAPVALLIALFFI), 253–273 (FVQMLAIFVIPTALCFAFGEV), 283–303 (LLWAMSVIFVICVGVVMWAEV), 329–349 (VLVSSLFAVVTTAASCGAVIA), 356–376 (ALGGMVPMWLMQIGEVVFGGV), 379–399 (GLYGMMLFVLLAVFIAGLMIG), 416–436 (LTALAILVTPTLVLMGAALAM), 484–504 (LLAFCMFVGRFGVIIPVMAIA), and 526–546 (LFVGLLIGTVLLVGALTFIPA).

The protein belongs to the KdpA family. As to quaternary structure, the system is composed of three essential subunits: KdpA, KdpB and KdpC.

It localises to the cell inner membrane. Part of the high-affinity ATP-driven potassium transport (or Kdp) system, which catalyzes the hydrolysis of ATP coupled with the electrogenic transport of potassium into the cytoplasm. This subunit binds the periplasmic potassium ions and delivers the ions to the membrane domain of KdpB through an intramembrane tunnel. The protein is Potassium-transporting ATPase potassium-binding subunit of Escherichia fergusonii (strain ATCC 35469 / DSM 13698 / CCUG 18766 / IAM 14443 / JCM 21226 / LMG 7866 / NBRC 102419 / NCTC 12128 / CDC 0568-73).